The chain runs to 408 residues: Acetate kinase (408 aa).

Asn-10 contributes to the Mg(2+) binding site. Lys-17 lines the ATP pocket. Arg-96 is a binding site for substrate. The active-site Proton donor/acceptor is the Asp-153. ATP-binding positions include 213-217 (HLGNG) and 288-290 (DLR). Glu-393 contacts Mg(2+).

It belongs to the acetokinase family. As to quaternary structure, homodimer. Requires Mg(2+) as cofactor. It depends on Mn(2+) as a cofactor.

The protein localises to the cytoplasm. The catalysed reaction is acetate + ATP = acetyl phosphate + ADP. Its pathway is metabolic intermediate biosynthesis; acetyl-CoA biosynthesis; acetyl-CoA from acetate: step 1/2. Catalyzes the formation of acetyl phosphate from acetate and ATP. Can also catalyze the reverse reaction. In Borrelia duttonii (strain Ly), this protein is Acetate kinase.